Reading from the N-terminus, the 344-residue chain is Anthranilate phosphoribosyltransferase 2 (344 aa).

5-phospho-alpha-D-ribose 1-diphosphate is bound by residues glycine 81, 84–85 (GD), threonine 89, 91–94 (NIST), 109–117 (KHGNRALSS), and alanine 121. Residue glycine 81 coordinates anthranilate. Residue serine 93 participates in Mg(2+) binding. Residue asparagine 112 coordinates anthranilate. Arginine 167 provides a ligand contact to anthranilate. Residues aspartate 226 and glutamate 227 each contribute to the Mg(2+) site.

This sequence belongs to the anthranilate phosphoribosyltransferase family. Homodimer. Mg(2+) serves as cofactor.

It catalyses the reaction N-(5-phospho-beta-D-ribosyl)anthranilate + diphosphate = 5-phospho-alpha-D-ribose 1-diphosphate + anthranilate. Its pathway is amino-acid biosynthesis; L-tryptophan biosynthesis; L-tryptophan from chorismate: step 2/5. Its function is as follows. Catalyzes the transfer of the phosphoribosyl group of 5-phosphorylribose-1-pyrophosphate (PRPP) to anthranilate to yield N-(5'-phosphoribosyl)-anthranilate (PRA). In Ralstonia nicotianae (strain ATCC BAA-1114 / GMI1000) (Ralstonia solanacearum), this protein is Anthranilate phosphoribosyltransferase 2.